The sequence spans 371 residues: Cytochrome b (371 aa).

4 consecutive transmembrane segments (helical) span residues 25–45 (FGSM…FLAV), 69–90 (WMMQ…YIHI), 105–125 (WMSG…GYIL), and 170–190 (FFAL…LHIL). H75 and H89 together coordinate heme b. Heme b contacts are provided by H174 and H188. H193 contacts a ubiquinone. Helical transmembrane passes span 218–238 (YKDL…TFFL), 280–300 (LGGA…PFTH), 312–332 (MSQL…WAAT), and 339–358 (FMMI…ISNP).

Belongs to the cytochrome b family. The cytochrome bc1 complex contains 3 respiratory subunits (MT-CYB, CYC1 and UQCRFS1), 2 core proteins (UQCRC1 and UQCRC2) and probably 6 low-molecular weight proteins. It depends on heme b as a cofactor.

The protein localises to the mitochondrion inner membrane. In terms of biological role, component of the ubiquinol-cytochrome c reductase complex (complex III or cytochrome b-c1 complex) that is part of the mitochondrial respiratory chain. The b-c1 complex mediates electron transfer from ubiquinol to cytochrome c. Contributes to the generation of a proton gradient across the mitochondrial membrane that is then used for ATP synthesis. This is Cytochrome b (MT-CYB) from Casarea dussumieri (Round Island keel-scaled boa).